We begin with the raw amino-acid sequence, 167 residues long: Translationally-controlled tumor protein homolog (167 aa).

One can recognise a TCTP domain in the interval 1–167 (MIIYTDIISG…WKHGVKAEKI (167 aa)).

It belongs to the TCTP family.

The protein resides in the cytoplasm. It localises to the cytoskeleton. Its function is as follows. Involved in protein synthesis. Involved in microtubule stabilization. The protein is Translationally-controlled tumor protein homolog of Kluyveromyces lactis (strain ATCC 8585 / CBS 2359 / DSM 70799 / NBRC 1267 / NRRL Y-1140 / WM37) (Yeast).